The chain runs to 443 residues: Glutamyl-tRNA reductase (443 aa).

Residues 49–52, Ser-109, 114–116, and Gln-120 each bind substrate; these read TCNR and ETQ. The active-site Nucleophile is Cys-50. 189–194 contacts NADP(+); it reads GAGKMG.

The protein belongs to the glutamyl-tRNA reductase family. In terms of assembly, homodimer.

It carries out the reaction (S)-4-amino-5-oxopentanoate + tRNA(Glu) + NADP(+) = L-glutamyl-tRNA(Glu) + NADPH + H(+). Its pathway is porphyrin-containing compound metabolism; protoporphyrin-IX biosynthesis; 5-aminolevulinate from L-glutamyl-tRNA(Glu): step 1/2. In terms of biological role, catalyzes the NADPH-dependent reduction of glutamyl-tRNA(Glu) to glutamate 1-semialdehyde (GSA). This is Glutamyl-tRNA reductase from Bacillus mycoides (strain KBAB4) (Bacillus weihenstephanensis).